We begin with the raw amino-acid sequence, 437 residues long: Nuclear hormone receptor family member nhr-100 (437 aa).

The segment at residues 21–96 (DTSCLVCGDP…VGMDANAVRS (76 aa)) is a DNA-binding region (nuclear receptor). NR C4-type zinc fingers lie at residues 24 to 44 (CLVC…CNGC) and 60 to 79 (CSFN…CRAC). Positions 141-409 (QTKEIIAHML…SGGGLPYDIH (269 aa)) constitute an NR LBD domain.

The protein belongs to the nuclear hormone receptor family.

It is found in the nucleus. Orphan nuclear receptor. This is Nuclear hormone receptor family member nhr-100 (nhr-100) from Caenorhabditis elegans.